Consider the following 212-residue polypeptide: Uridine kinase (212 aa).

13–20 (GASASGKS) provides a ligand contact to ATP.

Belongs to the uridine kinase family.

The protein localises to the cytoplasm. It carries out the reaction uridine + ATP = UMP + ADP + H(+). The enzyme catalyses cytidine + ATP = CMP + ADP + H(+). Its pathway is pyrimidine metabolism; CTP biosynthesis via salvage pathway; CTP from cytidine: step 1/3. It participates in pyrimidine metabolism; UMP biosynthesis via salvage pathway; UMP from uridine: step 1/1. The polypeptide is Uridine kinase (Shewanella denitrificans (strain OS217 / ATCC BAA-1090 / DSM 15013)).